The following is a 198-amino-acid chain: NAD(P)H dehydrogenase (quinone) (198 aa).

The region spanning Val-4–Val-190 is the Flavodoxin-like domain. Residues Ser-10–Ile-15 and Thr-78–Phe-80 contribute to the FMN site. Tyr-12 lines the NAD(+) pocket. Position 98 (Trp-98) interacts with substrate. Residues Ser-113–Gly-119 and His-134 contribute to the FMN site.

The protein belongs to the WrbA family. It depends on FMN as a cofactor.

The catalysed reaction is a quinone + NADH + H(+) = a quinol + NAD(+). The enzyme catalyses a quinone + NADPH + H(+) = a quinol + NADP(+). In Rhizobium johnstonii (strain DSM 114642 / LMG 32736 / 3841) (Rhizobium leguminosarum bv. viciae), this protein is NAD(P)H dehydrogenase (quinone).